Consider the following 285-residue polypeptide: MRIDGHTRLAAVVASPIKHSISPFIHNLAFEKTHVNGVYVAWEIPESDLAETVENIRRYNMFGINLSMPYKEKVIPFLDGLSPEAQLIGAVNTVVNRDGRLIGHNTDGFGFFASLKNFNPKDTHIMILGAGGAAKSIVTQAVLDGAKKVSIYVRPQSLVKAKENFRTLLDQTDCYLEFHDLTDADHFQKELRQTDLLVNATSVGMDGESLPISIDTRFPKELLVADIIYQPFETPFLALARKQEIEAVNGLGMLLYQAAGAFKLWTGENMPTGAIWQELENIYNS.

Shikimate contacts are provided by residues 20-22 and Ser-67; that span reads SIS. Lys-71 (proton acceptor) is an active-site residue. 2 residues coordinate shikimate: Asn-92 and Asp-107. NADP(+)-binding positions include 129-133 and Ile-227; that span reads GAGGA. Shikimate is bound at residue Tyr-229. Gly-250 serves as a coordination point for NADP(+).

This sequence belongs to the shikimate dehydrogenase family. As to quaternary structure, homodimer.

The catalysed reaction is shikimate + NADP(+) = 3-dehydroshikimate + NADPH + H(+). Its pathway is metabolic intermediate biosynthesis; chorismate biosynthesis; chorismate from D-erythrose 4-phosphate and phosphoenolpyruvate: step 4/7. Functionally, involved in the biosynthesis of the chorismate, which leads to the biosynthesis of aromatic amino acids. Catalyzes the reversible NADPH linked reduction of 3-dehydroshikimate (DHSA) to yield shikimate (SA). This Streptococcus thermophilus (strain ATCC BAA-491 / LMD-9) protein is Shikimate dehydrogenase (NADP(+)).